Reading from the N-terminus, the 252-residue chain is Isoprenyl transferase 2 (252 aa).

Asp26 is a catalytic residue. Asp26 provides a ligand contact to Mg(2+). Residues 27-30 (GNGR), Trp31, Arg39, His43, and 71-73 (SSE) each bind substrate. Catalysis depends on Asn74, which acts as the Proton acceptor. Residues Trp75, Arg77, Arg194, and 200-202 (RLS) contribute to the substrate site. Glu213 is a Mg(2+) binding site.

The protein belongs to the UPP synthase family. As to quaternary structure, homodimer. The cofactor is Mg(2+).

Functionally, catalyzes the condensation of isopentenyl diphosphate (IPP) with allylic pyrophosphates generating different type of terpenoids. This is Isoprenyl transferase 2 from Bradyrhizobium diazoefficiens (strain JCM 10833 / BCRC 13528 / IAM 13628 / NBRC 14792 / USDA 110).